Here is a 375-residue protein sequence, read N- to C-terminus: Adiponectin receptor protein 1 (375 aa).

Residues 1–60 (MSSHKGSVVAQGNGAPASNREADTVELAELGPLLEEKGKRVIANPPKAEEEQTCPVPQEE) form a disordered region. Over 1-136 (MSSHKGSVVA…SIFRIHTETG (136 aa)) the chain is Cytoplasmic. A helical transmembrane segment spans residues 137–157 (NIWTHLLGFVLFLFLGILTML). The Extracellular segment spans residues 158–170 (RPNMYFMAPLQEK). A helical transmembrane segment spans residues 171-191 (VVFGMFFLGAVLCLSFSWLFH). Histidine 191 lines the Zn(2+) pocket. Over 192 to 203 (TVYCHSEKVSRT) the chain is Cytoplasmic. A helical transmembrane segment spans residues 204 to 224 (FSKLDYSGIALLIMGSFVPWL). Over 225–234 (YYSFYCSPQP) the chain is Extracellular. Residues 235 to 255 (RLIYLSIVCVLGISAIIVAQW) form a helical membrane-spanning segment. The Cytoplasmic portion of the chain corresponds to 256 to 264 (DRFATPKHR). Residues 265–285 (QTRAGVFLGLGLSGVVPTMHF) form a helical membrane-spanning segment. Residues 286-298 (TIAEGFVKATTVG) lie on the Extracellular side of the membrane. A helical transmembrane segment spans residues 299–319 (QMGWFFLMAVMYITGAGLYAA). Over 320-337 (RIPERFFPGKFDIWFQSH) the chain is Cytoplasmic. Zn(2+) contacts are provided by histidine 337 and histidine 341. The helical transmembrane segment at 338–358 (QIFHVLVVAAAFVHFYGVSNL) threads the bilayer. Topologically, residues 359 to 375 (QEFRYGLEGGCTDDTLL) are extracellular.

This sequence belongs to the ADIPOR family. As to quaternary structure, may form homooligomers and heterooligomers with ADIPOR2. Interacts with APPL2 (via BAR domain); hinders the accessibility of APPL1 to ADIPOR1; negatively regulates adiponectin signaling; ADIPOQ dissociates this interaction and facilitates the recruitment of APPL1 to ADIPOR1. Interacts with APPL1; ADIPOQ enhances this interaction; inhibites adiponectin-stimulated binding of APPL2 to ADIPOR1. In terms of tissue distribution, widely expressed. Highly expressed in heart and skeletal muscle. Expressed at intermediate level in brain, spleen, kidney, liver, placenta, lung and peripheral blood leukocytes. Weakly expressed in colon, thymus and small intestine.

Its subcellular location is the cell membrane. Functionally, receptor for ADIPOQ, an essential hormone secreted by adipocytes that regulates glucose and lipid metabolism. Required for normal glucose and fat homeostasis and for maintaining a normal body weight. ADIPOQ-binding activates a signaling cascade that leads to increased AMPK activity, and ultimately to increased fatty acid oxidation, increased glucose uptake and decreased gluconeogenesis. Has high affinity for globular adiponectin and low affinity for full-length adiponectin. This Homo sapiens (Human) protein is Adiponectin receptor protein 1.